We begin with the raw amino-acid sequence, 1442 residues long: Sulfite reductase [NADPH] subunit beta (1442 aa).

One can recognise a Flavodoxin-like domain in the interval 682 to 831 (LHVYYASDGG…AYSEWEPKLW (150 aa)). S903 is subject to Phosphoserine. The [4Fe-4S] cluster site is built by C1300, C1306, C1345, and C1349. C1349 is a siroheme binding site.

It belongs to the nitrite and sulfite reductase 4Fe-4S domain family. In terms of assembly, alpha(2)-beta(2). The alpha component is a flavoprotein, the beta component is a hemoprotein. Siroheme serves as cofactor. The cofactor is [4Fe-4S] cluster.

The protein resides in the cytoplasm. The catalysed reaction is hydrogen sulfide + 3 NADP(+) + 3 H2O = sulfite + 3 NADPH + 4 H(+). The protein operates within sulfur metabolism; hydrogen sulfide biosynthesis; hydrogen sulfide from sulfite (NADPH route): step 1/1. Catalyzes the reduction of sulfite to sulfide, one of several activities required for the biosynthesis of L-cysteine from sulfate. The sequence is that of Sulfite reductase [NADPH] subunit beta (MET5) from Saccharomyces cerevisiae (strain ATCC 204508 / S288c) (Baker's yeast).